A 189-amino-acid chain; its full sequence is Protein Rex (189 aa).

The span at 1–16 (MPKTRRRPRRSQRKRP) shows a compositional bias: basic residues. The segment at 1 to 27 (MPKTRRRPRRSQRKRPPTPWPTSQGLD) is disordered. A Nuclear localization signal, and RNA-binding (RxRE) motif is present at residues 2-18 (PKTRRRPRRSQRKRPPT). The interval 56–70 (RPAYIVTPYWPPVQS) is homomultimerization. Serine 70 is modified (phosphoserine; by host). The short motif at 82–93 (LSAQLYSSLSLD) is the Nuclear export signal element. The disordered stretch occupies residues 87–189 (YSSLSLDSPP…PPSPGPSCPM (103 aa)). Over residues 105–114 (PLRSLPRQSL) the composition is skewed to low complexity. A homomultimerization region spans residues 123 to 131 (PSSRPCANT). The segment covering 143 to 164 (LGSTSQPCLFQTPDSGPKTCTP) has biased composition (polar residues). A Phosphothreonine; by host modification is found at threonine 174. Serine 177 is subject to Phosphoserine; by host. The span at 178-189 (FPPPSPGPSCPM) shows a compositional bias: pro residues.

It belongs to the deltaretrovirus Rex protein family. In terms of assembly, homomultimer. Multimeric assembly is essential for activity and involves XPO1. Binds to human XPO1 and KPNB1. Interacts (via N-terminal nuclear localization signal) with human NPM1. Phosphorylated.

The protein localises to the host nucleus. Its subcellular location is the host nucleolus. It is found in the host cytoplasm. Its function is as follows. Rex escorts unspliced gag-pro-pol and singly spliced env mRNAs out of the nucleus of infected cells. These mRNAs carry a recognition sequence called Rex responsive element (RxRE or XRE) located at the 3' region of the long terminal repeat (LTR). This function is essential since most HTLV proteins are translated from unspliced or partially spliced pre-mRNAs that cannot exit the nucleus by the pathway used by fully processed cellular mRNAs. Rex itself is translated from a fully spliced mRNA that probably readily exits the nucleus. Rex's nuclear localization signal (NLS) binds directly to KPNB1/importin beta-1 without previous binding to KPNA1/importin alpha-1. KPNB1 binds to the GDP bound form of RAN (Ran-GDP) and targets Rex to the nucleus. In the nucleus, the conversion from Ran-GDP to Ran-GTP dissociates Rex from KPNB1 and allows Rex's binding to the RRE in viral pre-mRNAs. Rex multimerizes on the RRE via cooperative assembly. This multimerization is critical for its full biological activity, since it may shield the viral RNA from being spliced or down-regulated, and probably exposes Rex's nuclear export signal (NES) to the surface. Rex can then form a complex with XPO1/CRM1, RANBP3 and Ran-GTP, leading to nuclear export of the complex. Conversion from Ran-GTP to Ran-GDP mediates dissociation of the Rex/RRE/XPO1/RANBP3/RAN complex, so that Rex can return to the nucleus for a subsequent round of export. In Human T-cell leukemia virus 1 (isolate Caribbea HS-35 subtype A) (HTLV-1), this protein is Protein Rex.